Consider the following 425-residue polypeptide: Glutamyl-tRNA(Gln) amidotransferase subunit A (425 aa).

Residues Lys29 and Ser104 each act as charge relay system in the active site. Residue Ser128 is the Acyl-ester intermediate of the active site.

The protein belongs to the amidase family. GatA subfamily. In terms of assembly, heterotrimer of A, B and C subunits.

The enzyme catalyses L-glutamyl-tRNA(Gln) + L-glutamine + ATP + H2O = L-glutaminyl-tRNA(Gln) + L-glutamate + ADP + phosphate + H(+). Its function is as follows. Allows the formation of correctly charged Gln-tRNA(Gln) through the transamidation of misacylated Glu-tRNA(Gln) in organisms which lack glutaminyl-tRNA synthetase. The reaction takes place in the presence of glutamine and ATP through an activated gamma-phospho-Glu-tRNA(Gln). This is Glutamyl-tRNA(Gln) amidotransferase subunit A from Haloarcula marismortui (strain ATCC 43049 / DSM 3752 / JCM 8966 / VKM B-1809) (Halobacterium marismortui).